A 265-amino-acid chain; its full sequence is Apolipoprotein A-I (265 aa).

A signal peptide spans 1-18 (MKALVLTLAVLFFTGSQA). A run of 2 repeats spans residues 67 to 88 (LKLL…EQLG) and 89 to 110 (PVTQ…QEMN). The interval 67–265 (LKLLDNWDSL…DEASKKLNAQ (199 aa)) is 10 X approximate tandem repeats. Met-109 bears the Methionine sulfoxide mark. Residues 111–121 (KDLEEVKQKVQ) form a 3; half-length repeat. 5 repeat units span residues 122–142 (PYLD…RQKV), 144–165 (PLGE…DKLT), 166–187 (PLAE…QQLA), 188–209 (PYSD…EGGG), and 210–230 (SLAE…EKAK). A 9; half-length repeat occupies 231 to 241 (PALEDLRQGLL). The stretch at 242–265 (PVLESLKVSILAAIDEASKKLNAQ) is repeat 10.

This sequence belongs to the apolipoprotein A1/A4/E family. Homodimer. Interacts with APOA1BP and CLU. Component of a sperm activating protein complex (SPAP), consisting of APOA1, an immunoglobulin heavy chain, an immunoglobulin light chain and albumin. Interacts with NDRG1. Interacts with SCGB3A2. Interacts with NAXE and YJEFN3. Post-translationally, glycosylated. In terms of processing, palmitoylated. Phosphorylation sites are present in the extracellular medium. In terms of tissue distribution, major protein of plasma HDL, also found in chylomicrons.

Its subcellular location is the secreted. In terms of biological role, participates in the reverse transport of cholesterol from tissues to the liver for excretion by promoting cholesterol efflux from tissues and by acting as a cofactor for the lecithin cholesterol acyltransferase (LCAT). As part of the SPAP complex, activates spermatozoa motility. This Physeter macrocephalus (Sperm whale) protein is Apolipoprotein A-I (APOA1).